Consider the following 90-residue polypeptide: Iron oxidase (90 aa).

The tat-type signal signal peptide spans 1 to 37; that stretch reads MSEKDKMITRRDALRNIAVVVGSVATTTMMGVGVADA. Residues Cys-57, Cys-60, Cys-69, and Cys-82 each contribute to the [4Fe-4S] cluster site.

The protein belongs to the high-potential iron-sulfur protein (HiPIP) family. Homomultimer. Predicted to be exported by the Tat system. The position of the signal peptide cleavage has been experimentally proven.

Its subcellular location is the periplasm. In terms of biological role, catalyzes the oxidation of Fe(2+) to Fe(3+) coupled to cytochrome c552 reduction. In Acidithiobacillus ferrooxidans (Thiobacillus ferrooxidans), this protein is Iron oxidase (iro).